The chain runs to 369 residues: MEKVIPVHLPHQSYAVVIASGGLGQMGDYLQHQAHLKPGQKVLVVSNPLIFKHYGEKVLVSLQRAGFATSTCLLPAGERYKTLKSVQQIYDCALEQRLERSSTILALGGGVIGDMAGFAAATWLRGINVVQVPTTLLAMVDAAIGGKTGVNHPQGKNLIGAFHQPRLVLIDPDTLKTLPGREFRAALAEVIKYGVIWDGNLFQKLEAAERLDQYRTLSPQLLADLLVHSCQAKVDVVTKDEKEAGLRAILNYGHTIGHGIESLTNYRKFNHGEAVGLGMVAVGQLAVDLGFWSQEECDRQFSLIQKAHLPTHIPADLDLNLLIDSLQTDKKVQAGQVRFIVPTAIGAVTITDQIPTPAIVHVLKQMQKG.

Residues 110 to 114 (GVIGD), 134 to 135 (TT), Lys147, Lys156, and 174 to 177 (TLKT) each bind NAD(+). 3 residues coordinate Zn(2+): Glu189, His254, and His271.

Belongs to the sugar phosphate cyclases superfamily. Dehydroquinate synthase family. Requires Co(2+) as cofactor. The cofactor is Zn(2+). NAD(+) serves as cofactor.

It is found in the cytoplasm. It catalyses the reaction 7-phospho-2-dehydro-3-deoxy-D-arabino-heptonate = 3-dehydroquinate + phosphate. It participates in metabolic intermediate biosynthesis; chorismate biosynthesis; chorismate from D-erythrose 4-phosphate and phosphoenolpyruvate: step 2/7. Its function is as follows. Catalyzes the conversion of 3-deoxy-D-arabino-heptulosonate 7-phosphate (DAHP) to dehydroquinate (DHQ). This Cyanothece sp. (strain PCC 7425 / ATCC 29141) protein is 3-dehydroquinate synthase.